A 351-amino-acid polypeptide reads, in one-letter code: Type II methyltransferase M.DsaV (351 aa).

Residues 6 to 312 (LKFIDLFAGI…QKMLSYIDLT (307 aa)) enclose the SAM-dependent MTase C5-type domain. The active site involves C75.

This sequence belongs to the class I-like SAM-binding methyltransferase superfamily. C5-methyltransferase family.

The catalysed reaction is a 2'-deoxycytidine in DNA + S-adenosyl-L-methionine = a 5-methyl-2'-deoxycytidine in DNA + S-adenosyl-L-homocysteine + H(+). Functionally, a methylase, recognizes the double-stranded sequence 5'-CCNGG-3', methylates C-2 on both strands, and protects the DNA from cleavage by the DsaV endonuclease. The polypeptide is Type II methyltransferase M.DsaV (Dactylococcopsis salina (Myxobaktron salinum)).